Here is a 60-residue protein sequence, read N- to C-terminus: Large ribosomal subunit protein bL32c (60 aa).

It belongs to the bacterial ribosomal protein bL32 family.

The protein resides in the plastid. It localises to the chloroplast. The chain is Large ribosomal subunit protein bL32c from Psilotum nudum (Whisk fern).